We begin with the raw amino-acid sequence, 658 residues long: MFQNNPLLSQLKQQIRDSKQQVEGIVKGSDKAFGFLECDKKSYFIPPAAMKKVMHGDKIKALIEVVGEKEQAEPDALIEPMLTRFIARVRFNKDKKLQVLVDHPQINQAIGAAQDKSITETLQEGDWVVATLKTHPLRDDRFFFAQIQQFICRAEDELAPWWVTLARHGQSRYPVQGCADYPMIDQHTREDLTALHFITIDAETTLDMDDALYLEPIHQAEEQIGWRLVVAVADPTAYIPLDSQIEQEARQRCFTNYLPGFNIPMLPPELSDERCSLMQDEIRPALVCYIETDLTGNITEKPRFVSAYVQSKAKLAYDHVSDYLENCLDAWQPENPQIAQQIQWLHQFTQARIEWRKQHALLFKEKPDYSFILAENGSVQAIQAQYRRIANQMVEECMILANICAAHYLDEHAKCGIFNTHSGFDKKYLESAHQFLLNQLSDETNQAVLATRYSVANLTTLAGYCQMRHDIELLNSDYLELRLRRFLTFAEFKSEIAPHFGLGLSGYATWTSPIRKYSDMVNHRLIKAVLTQQTCEKPQDDLFVRLQEARRQNRLVERDIADWLYCRYLATQVEQKPTFQAEIQDVMRGGLRVQLLANGAPMFIPASLIHDNKEAIQVNTDTLTLSIQGEVKYKLGDIIQVQLLDVKEETRSIVGTLC.

One can recognise an RNB domain in the interval 189 to 531 (REDLTALHFI…NHRLIKAVLT (343 aa)). The S1 motif domain occupies 576–658 (KPTFQAEIQD…ETRSIVGTLC (83 aa)).

It belongs to the RNR ribonuclease family. RNase II subfamily.

It localises to the cytoplasm. It catalyses the reaction Exonucleolytic cleavage in the 3'- to 5'-direction to yield nucleoside 5'-phosphates.. Functionally, involved in mRNA degradation. Hydrolyzes single-stranded polyribonucleotides processively in the 3' to 5' direction. The chain is Exoribonuclease 2 from Pasteurella multocida (strain Pm70).